A 103-amino-acid polypeptide reads, in one-letter code: Large ribosomal subunit protein bL21 (103 aa).

It belongs to the bacterial ribosomal protein bL21 family. As to quaternary structure, part of the 50S ribosomal subunit. Contacts protein L20.

This protein binds to 23S rRNA in the presence of protein L20. This is Large ribosomal subunit protein bL21 from Haemophilus influenzae (strain 86-028NP).